A 148-amino-acid polypeptide reads, in one-letter code: uncharacterized protein (148 aa).

One can recognise an HTH asnC-type domain in the interval 3–64; sequence LDALDRKILE…KLNYESIGYD (62 aa). Positions 22–41 form a DNA-binding region, H-T-H motif; it reads YREIAKDLNVAVGTIYNRIK.

This is an uncharacterized protein from Pyrococcus horikoshii (strain ATCC 700860 / DSM 12428 / JCM 9974 / NBRC 100139 / OT-3).